The sequence spans 201 residues: Recombination protein RecR (201 aa).

The segment at 57–72 (CADCRTFTEQEVCNIC) adopts a C4-type zinc-finger fold. One can recognise a Toprim domain in the interval 81–176 (GQICVVESPA…DASRIAHGVP (96 aa)).

The protein belongs to the RecR family.

In terms of biological role, may play a role in DNA repair. It seems to be involved in an RecBC-independent recombinational process of DNA repair. It may act with RecF and RecO. The chain is Recombination protein RecR from Klebsiella pneumoniae subsp. pneumoniae (strain ATCC 700721 / MGH 78578).